A 141-amino-acid chain; its full sequence is Nucleoside diphosphate kinase (141 aa).

The ATP site is built by Lys11, Phe59, Arg87, Thr93, Arg104, and Asn114. Catalysis depends on His117, which acts as the Pros-phosphohistidine intermediate.

The protein belongs to the NDK family. In terms of assembly, homotetramer. Requires Mg(2+) as cofactor.

The protein resides in the cytoplasm. It catalyses the reaction a 2'-deoxyribonucleoside 5'-diphosphate + ATP = a 2'-deoxyribonucleoside 5'-triphosphate + ADP. It carries out the reaction a ribonucleoside 5'-diphosphate + ATP = a ribonucleoside 5'-triphosphate + ADP. Major role in the synthesis of nucleoside triphosphates other than ATP. The ATP gamma phosphate is transferred to the NDP beta phosphate via a ping-pong mechanism, using a phosphorylated active-site intermediate. This chain is Nucleoside diphosphate kinase, found in Burkholderia mallei (strain NCTC 10247).